Here is a 173-residue protein sequence, read N- to C-terminus: Small ribosomal subunit protein uS4c (173 aa).

Residues 94–155 (SRLDSKIYRS…TKLTSELIEK (62 aa)) enclose the S4 RNA-binding domain.

It belongs to the universal ribosomal protein uS4 family. In terms of assembly, part of the 30S ribosomal subunit. Contacts protein S5. The interaction surface between S4 and S5 is involved in control of translational fidelity.

The protein resides in the plastid. Its function is as follows. One of the primary rRNA binding proteins, it binds directly to 16S rRNA where it nucleates assembly of the body of the 30S subunit. Functionally, with S5 and S12 plays an important role in translational accuracy. The chain is Small ribosomal subunit protein uS4c (rps4) from Helicosporidium sp. subsp. Simulium jonesii (Green alga).